The chain runs to 358 residues: Probable dual-specificity RNA methyltransferase RlmN 2 (358 aa).

Glutamate 90 serves as the catalytic Proton acceptor. One can recognise a Radical SAM core domain in the interval 96–328 (SGIRRTVCVS…VNTCRYTKGD (233 aa)). A disulfide bridge links cysteine 103 with cysteine 334. [4Fe-4S] cluster contacts are provided by cysteine 110, cysteine 114, and cysteine 117. Residues 160-161 (GE), serine 192, 215-217 (SLH), and asparagine 291 each bind S-adenosyl-L-methionine. The S-methylcysteine intermediate role is filled by cysteine 334.

This sequence belongs to the radical SAM superfamily. RlmN family. The cofactor is [4Fe-4S] cluster.

The protein localises to the cytoplasm. It carries out the reaction adenosine(2503) in 23S rRNA + 2 reduced [2Fe-2S]-[ferredoxin] + 2 S-adenosyl-L-methionine = 2-methyladenosine(2503) in 23S rRNA + 5'-deoxyadenosine + L-methionine + 2 oxidized [2Fe-2S]-[ferredoxin] + S-adenosyl-L-homocysteine. The enzyme catalyses adenosine(37) in tRNA + 2 reduced [2Fe-2S]-[ferredoxin] + 2 S-adenosyl-L-methionine = 2-methyladenosine(37) in tRNA + 5'-deoxyadenosine + L-methionine + 2 oxidized [2Fe-2S]-[ferredoxin] + S-adenosyl-L-homocysteine. Functionally, specifically methylates position 2 of adenine 2503 in 23S rRNA and position 2 of adenine 37 in tRNAs. In Protochlamydia amoebophila (strain UWE25), this protein is Probable dual-specificity RNA methyltransferase RlmN 2.